Reading from the N-terminus, the 240-residue chain is Sialidase 85-1.2 (240 aa).

Residues 127–142 are compositionally biased toward acidic residues; it reads DDDDGGDDDDEEDSQE. 2 disordered regions span residues 127–158 and 221–240; these read DDDD…GKKP and HRGG…QRDA. Residues 144–155 show a composition bias toward basic and acidic residues; that stretch reads SSPKESSPEKIG.

It belongs to the glycosyl hydrolase 33 family.

The catalysed reaction is Hydrolysis of alpha-(2-&gt;3)-, alpha-(2-&gt;6)-, alpha-(2-&gt;8)- glycosidic linkages of terminal sialic acid residues in oligosaccharides, glycoproteins, glycolipids, colominic acid and synthetic substrates.. Developmentally regulated neuraminidase implicated in parasite invasion of cells. May contribute to the pathology during T.cruzi infection by cleaving sialic acid from cells of the immune system. This is Sialidase 85-1.2 (SA85-1.2) from Trypanosoma cruzi.